We begin with the raw amino-acid sequence, 371 residues long: Transcription factor bHLH77 (371 aa).

Disordered stretches follow at residues 1–25, 65–206, and 352–371; these read MNMD…FGNG, SGGI…SLAE, and QSNN…KLEP. The span at 85–96 shows a compositional bias: polar residues; sequence SQPTTQESNKSS. Low complexity predominate over residues 128–142; it reads SPASSSLTASNSKVS. The segment covering 165–190 has biased composition (basic and acidic residues); that stretch reads GVEKCDSKGDNKDDAKPPEAPKDYIH. The bHLH domain occupies 197 to 247; the sequence is QATDSHSLAERARREKISERMTLLQDLVPGCNRITGKAVMLDEIINYVQSL.

As to quaternary structure, homodimer. Interacts with IBH1. As to expression, expressed constitutively in roots, leaves, stems, and flowers.

It is found in the nucleus. The polypeptide is Transcription factor bHLH77 (BHLH77) (Arabidopsis thaliana (Mouse-ear cress)).